Here is an 88-residue protein sequence, read N- to C-terminus: Long neurotoxin LNTX-2 (88 aa).

The signal sequence occupies residues 1–21 (MKTLLLTLVVVTIVCLDFGYA). 4 disulfides stabilise this stretch: Cys-24-Cys-42, Cys-35-Cys-63, Cys-67-Cys-78, and Cys-79-Cys-84.

The protein belongs to the three-finger toxin family. Long-chain subfamily. Type II alpha-neurotoxin sub-subfamily. As to expression, expressed by the venom gland.

Its subcellular location is the secreted. Functionally, binds with high affinity to muscular nicotinic acetylcholine receptors (nAChRs), whereas it binds with a low affinity to neuronal alpha-7/CHRNA7 nAChRs. In Demansia vestigiata (Lesser black whip snake), this protein is Long neurotoxin LNTX-2.